The primary structure comprises 361 residues: Chorismate synthase (361 aa).

2 residues coordinate NADP(+): R48 and R54. FMN is bound by residues 125–127, 238–239, G278, 293–297, and R319; these read RSS, NA, and KPTSS.

The protein belongs to the chorismate synthase family. Homotetramer. It depends on FMNH2 as a cofactor.

The catalysed reaction is 5-O-(1-carboxyvinyl)-3-phosphoshikimate = chorismate + phosphate. The protein operates within metabolic intermediate biosynthesis; chorismate biosynthesis; chorismate from D-erythrose 4-phosphate and phosphoenolpyruvate: step 7/7. Functionally, catalyzes the anti-1,4-elimination of the C-3 phosphate and the C-6 proR hydrogen from 5-enolpyruvylshikimate-3-phosphate (EPSP) to yield chorismate, which is the branch point compound that serves as the starting substrate for the three terminal pathways of aromatic amino acid biosynthesis. This reaction introduces a second double bond into the aromatic ring system. The sequence is that of Chorismate synthase from Salmonella choleraesuis (strain SC-B67).